A 313-amino-acid polypeptide reads, in one-letter code: Tyrosine--tRNA ligase (313 aa).

Tyr32 lines the L-tyrosine pocket. Residues 37–45 (PSGEIHLGH) carry the 'HIGH' region motif. Residues Tyr152, Gln156, Asp159, and Gln174 each contribute to the L-tyrosine site. The 'KMSKS' region motif lies at 208-212 (KMSSS). Position 211 (Ser211) interacts with ATP.

It belongs to the class-I aminoacyl-tRNA synthetase family. TyrS type 3 subfamily. In terms of assembly, homodimer.

The protein localises to the cytoplasm. It catalyses the reaction tRNA(Tyr) + L-tyrosine + ATP = L-tyrosyl-tRNA(Tyr) + AMP + diphosphate + H(+). Functionally, catalyzes the attachment of tyrosine to tRNA(Tyr) in a two-step reaction: tyrosine is first activated by ATP to form Tyr-AMP and then transferred to the acceptor end of tRNA(Tyr). This chain is Tyrosine--tRNA ligase, found in Methanospirillum hungatei JF-1 (strain ATCC 27890 / DSM 864 / NBRC 100397 / JF-1).